We begin with the raw amino-acid sequence, 382 residues long: RIB43A-like with coiled-coils protein 2 (382 aa).

The stretch at 222 to 255 forms a coiled coil; it reads NKSQAIESVERKKQEKKQEQEDNLAEITNLLRGD.

Belongs to the RIB43A family. Microtubule inner protein component of sperm flagellar doublet microtubules. As to expression, expressed in airway epithelial cells.

The protein resides in the cytoplasm. It localises to the cytoskeleton. Its subcellular location is the cilium axoneme. The protein localises to the flagellum axoneme. Microtubule inner protein (MIP) part of the dynein-decorated doublet microtubules (DMTs) in cilia axoneme, which is required for motile cilia beating. In Homo sapiens (Human), this protein is RIB43A-like with coiled-coils protein 2.